Here is a 224-residue protein sequence, read N- to C-terminus: Ribose-5-phosphate isomerase A (224 aa).

Residues Thr-26–Thr-29, Asp-82–Asp-85, and Lys-95–Gly-98 contribute to the substrate site. Catalysis depends on Glu-104, which acts as the Proton acceptor. Residue Lys-122 coordinates substrate.

Belongs to the ribose 5-phosphate isomerase family. Homodimer.

The enzyme catalyses aldehydo-D-ribose 5-phosphate = D-ribulose 5-phosphate. It participates in carbohydrate degradation; pentose phosphate pathway; D-ribose 5-phosphate from D-ribulose 5-phosphate (non-oxidative stage): step 1/1. Functionally, catalyzes the reversible conversion of ribose-5-phosphate to ribulose 5-phosphate. This is Ribose-5-phosphate isomerase A from Streptococcus suis (strain 98HAH33).